The chain runs to 299 residues: Fluorinase (299 aa).

Residues Asp-16, 21-23, Tyr-77, Ser-158, Asp-210, Asn-215, 269-270, and 277-279 each bind S-adenosyl-L-methionine; these read DDS, SR, and RNA.

As to quaternary structure, homohexamer; dimers of trimer.

The catalysed reaction is fluoride + S-adenosyl-L-methionine = 5'-deoxy-5'-fluoroadenosine + L-methionine. Its activity is regulated as follows. Competitively inhibited by S-adenosyl-L-homocysteine (AdoHcy) and S-adenosyl-L-homocysteine (SAH). Sinefungin is only weakly inhibitory. Its function is as follows. Involved in the biosynthesis of fluorometabolites. Catalyzes the formation of a C-F bond by combining S-adenosyl-L-methionine (SAM) and fluoride to generate 5'-fluoro-5'-deoxyadenosine (5'-FDA) and L-methionine. It can also use 2'-deoxyadenosine in place of adenosine as substrate. In Streptantibioticus cattleyicolor (Streptomyces cattleya), this protein is Fluorinase.